The primary structure comprises 511 residues: Sporulation-specific chitinase 2 (511 aa).

The signal sequence occupies residues methionine 1–tyrosine 34. Residues phenylalanine 73 to asparagine 472 enclose the GH18 domain. Residue asparagine 147 is glycosylated (N-linked (GlcNAc...) asparagine). Glutamate 223 acts as the Proton donor in catalysis. 3 N-linked (GlcNAc...) asparagine glycosylation sites follow: asparagine 228, asparagine 456, and asparagine 472.

This sequence belongs to the glycosyl hydrolase 18 family. Chitinase class III subfamily.

The protein localises to the secreted. It carries out the reaction Random endo-hydrolysis of N-acetyl-beta-D-glucosaminide (1-&gt;4)-beta-linkages in chitin and chitodextrins.. The chain is Sporulation-specific chitinase 2 (CTS2) from Saccharomyces cerevisiae (strain ATCC 204508 / S288c) (Baker's yeast).